We begin with the raw amino-acid sequence, 460 residues long: ATP synthase subunit beta 1 (460 aa).

149–156 (GGAGVGKT) is a binding site for ATP.

Belongs to the ATPase alpha/beta chains family. As to quaternary structure, F-type ATPases have 2 components, CF(1) - the catalytic core - and CF(0) - the membrane proton channel. CF(1) has five subunits: alpha(3), beta(3), gamma(1), delta(1), epsilon(1). CF(0) has three main subunits: a(1), b(2) and c(9-12). The alpha and beta chains form an alternating ring which encloses part of the gamma chain. CF(1) is attached to CF(0) by a central stalk formed by the gamma and epsilon chains, while a peripheral stalk is formed by the delta and b chains.

It localises to the cell inner membrane. The enzyme catalyses ATP + H2O + 4 H(+)(in) = ADP + phosphate + 5 H(+)(out). Its function is as follows. Produces ATP from ADP in the presence of a proton gradient across the membrane. The catalytic sites are hosted primarily by the beta subunits. The sequence is that of ATP synthase subunit beta 1 from Nitrosomonas eutropha (strain DSM 101675 / C91 / Nm57).